A 180-amino-acid chain; its full sequence is ATP-dependent protease subunit HslV (180 aa).

The active site involves threonine 7. The Na(+) site is built by glycine 165, cysteine 168, and threonine 171.

This sequence belongs to the peptidase T1B family. HslV subfamily. In terms of assembly, a double ring-shaped homohexamer of HslV is capped on each side by a ring-shaped HslU homohexamer. The assembly of the HslU/HslV complex is dependent on binding of ATP.

The protein localises to the cytoplasm. The catalysed reaction is ATP-dependent cleavage of peptide bonds with broad specificity.. Allosterically activated by HslU binding. Functionally, protease subunit of a proteasome-like degradation complex believed to be a general protein degrading machinery. The sequence is that of ATP-dependent protease subunit HslV from Bacillus cereus (strain Q1).